Here is a 62-residue protein sequence, read N- to C-terminus: Potassium channel toxin kappa-KTx 3.2 (62 aa).

The signal sequence occupies residues 1–26 (MKSTLMTASLLILVLLSIVDYASVYA). A propeptide spanning residues 27–36 (ELIDSEISME) is cleaved from the precursor. 2 cysteine pairs are disulfide-bonded: Cys-43-Cys-61 and Cys-47-Cys-57.

Belongs to the short scorpion toxin superfamily. Potassium channel inhibitor kappa-KTx family. Kappa-KTx 3 subfamily. In terms of tissue distribution, expressed by the venom gland.

Its subcellular location is the secreted. Functionally, potassium channel inhibitor (Kv). In Heterometrus petersii (Asian forest scorpion), this protein is Potassium channel toxin kappa-KTx 3.2.